A 556-amino-acid polypeptide reads, in one-letter code: MALDSVKHLPIHGVSAFSSVTVEIKSFFSTVKPRKTSTFVYAFVVTFVALTVFLAFSPSPITVALAPSISSYVLPNITVSNSSNSSPSSLDSNFTTLRTPAPENLTAVTKNLTFESPVANGTTDTNAKTITIQFQTGHAKENISCPDNKTARDLDTHGARKAPLSEVLAVNSTASPKRKQRRKSSLRKVIESLKSCEFFEGDWVKDDSYPLYKPGSCNLIDEQFNCISNGRPDVDFQKLKWKPKQCSLPRLNGGKLLEMIRGRRLVFVGDSLNRNMWESLVCILKGSVKDESQVFEAHGRHQFRWEAEYSFVFKDYNCTVEFFASPFLVQEWEVTEKNGTKKETLRLDLVGKSSEQYKGADILVFNTGHWWTHEKTSKGEDYYQEGSTVHPKLDVDEAFRKALTTWGRWVDKNVNPKKSLVFFRGYSPSHFSGGQWNAGGACDDETEPIKNETYLTPYMLKMEILERVLRGMKTPVTYLNITRLTDYRKDAHPSIYRKQKLSAEESKSPLLYQDCSHWCLPGVPDSWNEIFYAELLVKLDQLGGKRRRKALKDHRS.

A helical; Signal-anchor for type II membrane protein transmembrane segment spans residues 38 to 58 (TFVYAFVVTFVALTVFLAFSP). A GDS motif motif is present at residues 269–271 (GDS). Residues 514-528 (DCSHWCLPGVPDSWN) carry the DCXHWCLPGXXDXWN motif motif.

It belongs to the PC-esterase family. TBL subfamily. In terms of tissue distribution, not expressed in trichomes.

Its subcellular location is the membrane. Can complement TBR and is therefore functionally equivalent, but may work in different tissue. May act as a bridging protein that binds pectin and other cell wall polysaccharides. Probably involved in maintaining esterification of pectins. May be involved in the specific O-acetylation of cell wall polymers. This chain is Protein trichome birefringence-like 1 (TBL1), found in Arabidopsis thaliana (Mouse-ear cress).